The primary structure comprises 153 residues: L-alanine exporter AlaE (153 aa).

4 helical membrane-spanning segments follow: residues 16–36 (VAMV…LSEM), 42–62 (LSSR…YGLY), 86–106 (LFAY…AIGA), and 114–134 (AVGS…YFLE).

The protein belongs to the AlaE exporter family.

The protein resides in the cell inner membrane. Functionally, exports L-alanine. This is L-alanine exporter AlaE from Musicola paradisiaca (strain Ech703) (Dickeya paradisiaca).